Consider the following 188-residue polypeptide: dCTP deaminase (188 aa).

Residues 111 to 116 (KSTYAR), 135 to 137 (TLE), glutamine 156, tyrosine 170, and glutamine 180 each bind dCTP. The active-site Proton donor/acceptor is the glutamate 137.

It belongs to the dCTP deaminase family. In terms of assembly, homotrimer.

It catalyses the reaction dCTP + H2O + H(+) = dUTP + NH4(+). Its pathway is pyrimidine metabolism; dUMP biosynthesis; dUMP from dCTP (dUTP route): step 1/2. In terms of biological role, catalyzes the deamination of dCTP to dUTP. This Dichelobacter nodosus (strain VCS1703A) protein is dCTP deaminase.